The chain runs to 162 residues: Serine-protein kinase RsbW (162 aa).

The protein belongs to the anti-sigma-factor family.

The enzyme catalyses L-seryl-[protein] + ATP = O-phospho-L-seryl-[protein] + ADP + H(+). It catalyses the reaction L-threonyl-[protein] + ATP = O-phospho-L-threonyl-[protein] + ADP + H(+). In terms of biological role, negative regulator of sigma-B activity. Phosphorylates and inactivates its specific antagonist protein, RsbV. Upon phosphorylation of RsbV, RsbW is released and binds to sigma-B, thereby blocking its ability to form an RNA polymerase holoenzyme (E-sigma-B). The chain is Serine-protein kinase RsbW from Bacillus pumilus (strain SAFR-032).